A 213-amino-acid polypeptide reads, in one-letter code: Outer-membrane lipoprotein LolB (213 aa).

The signal sequence occupies residues 1-24 (MNNLSYFTKTKLVWVILSLSLLSA). Residue cysteine 25 is the site of N-palmitoyl cysteine attachment. Cysteine 25 carries the S-diacylglycerol cysteine lipid modification.

The protein belongs to the LolB family. In terms of assembly, monomer.

It is found in the cell outer membrane. Its function is as follows. Plays a critical role in the incorporation of lipoproteins in the outer membrane after they are released by the LolA protein. This Shewanella woodyi (strain ATCC 51908 / MS32) protein is Outer-membrane lipoprotein LolB.